A 239-amino-acid chain; its full sequence is Ribosomal RNA small subunit methyltransferase G (239 aa).

Residues G78, F83, 129–130 (AE), and R148 each bind S-adenosyl-L-methionine.

This sequence belongs to the methyltransferase superfamily. RNA methyltransferase RsmG family.

Its subcellular location is the cytoplasm. Specifically methylates the N7 position of a guanine in 16S rRNA. This chain is Ribosomal RNA small subunit methyltransferase G, found in Clostridium botulinum (strain ATCC 19397 / Type A).